Reading from the N-terminus, the 91-residue chain is Small integral membrane protein 13 (91 aa).

A helical membrane pass occupies residues 10–30 (LVFVATLLIVLLLMVCGWYFV). Residues 47–91 (DTGSQEGDHEPSGSETEEDTSSSPHRIRSARQRRAPADEGHRPLT) are disordered. Phosphoserine occurs at positions 58 and 60. Threonine 62 is modified (phosphothreonine). Serine 69 carries the phosphoserine modification. The segment covering 71–80 (HRIRSARQRR) has biased composition (basic residues). The segment covering 81-91 (APADEGHRPLT) has biased composition (basic and acidic residues).

It belongs to the SMIM13 family.

Its subcellular location is the membrane. The chain is Small integral membrane protein 13 (SMIM13) from Homo sapiens (Human).